A 753-amino-acid polypeptide reads, in one-letter code: 5-methyltetrahydropteroyltriglutamate--homocysteine methyltransferase (753 aa).

5-methyltetrahydropteroyltri-L-glutamate contacts are provided by residues 17-20 (RELK) and Lys-117. Residues 431–433 (IGS) and Glu-484 contribute to the L-homocysteine site. L-methionine-binding positions include 431–433 (IGS) and Glu-484. Residues 515-516 (RC) and Trp-561 each bind 5-methyltetrahydropteroyltri-L-glutamate. Asp-599 is an L-homocysteine binding site. Asp-599 serves as a coordination point for L-methionine. Glu-605 is a binding site for 5-methyltetrahydropteroyltri-L-glutamate. The Zn(2+) site is built by His-641, Cys-643, and Glu-665. The active-site Proton donor is the His-694. Residue Cys-726 participates in Zn(2+) binding.

The protein belongs to the vitamin-B12 independent methionine synthase family. It depends on Zn(2+) as a cofactor.

The catalysed reaction is 5-methyltetrahydropteroyltri-L-glutamate + L-homocysteine = tetrahydropteroyltri-L-glutamate + L-methionine. It functions in the pathway amino-acid biosynthesis; L-methionine biosynthesis via de novo pathway; L-methionine from L-homocysteine (MetE route): step 1/1. Functionally, catalyzes the transfer of a methyl group from 5-methyltetrahydrofolate to homocysteine resulting in methionine formation. The protein is 5-methyltetrahydropteroyltriglutamate--homocysteine methyltransferase of Escherichia coli O139:H28 (strain E24377A / ETEC).